Reading from the N-terminus, the 338-residue chain is Fructose-1,6-bisphosphatase class 1 1 (338 aa).

The Mg(2+) site is built by Glu-91, Asp-113, Leu-115, and Asp-116. Substrate contacts are provided by residues 116 to 119, Asn-208, and Lys-274; that span reads DGSS. Residue Glu-280 coordinates Mg(2+).

This sequence belongs to the FBPase class 1 family. In terms of assembly, homotetramer. The cofactor is Mg(2+).

It is found in the cytoplasm. It carries out the reaction beta-D-fructose 1,6-bisphosphate + H2O = beta-D-fructose 6-phosphate + phosphate. It participates in carbohydrate biosynthesis; gluconeogenesis. This is Fructose-1,6-bisphosphatase class 1 1 from Cupriavidus metallidurans (strain ATCC 43123 / DSM 2839 / NBRC 102507 / CH34) (Ralstonia metallidurans).